Here is a 120-residue protein sequence, read N- to C-terminus: Ribonuclease P protein component (120 aa).

Belongs to the RnpA family. Consists of a catalytic RNA component (M1 or rnpB) and a protein subunit.

The enzyme catalyses Endonucleolytic cleavage of RNA, removing 5'-extranucleotides from tRNA precursor.. Functionally, RNaseP catalyzes the removal of the 5'-leader sequence from pre-tRNA to produce the mature 5'-terminus. It can also cleave other RNA substrates such as 4.5S RNA. The protein component plays an auxiliary but essential role in vivo by binding to the 5'-leader sequence and broadening the substrate specificity of the ribozyme. This Blochmanniella floridana protein is Ribonuclease P protein component.